Here is a 629-residue protein sequence, read N- to C-terminus: Probable potassium transport system protein Kup 3 (629 aa).

12 helical membrane passes run Leu20–Phe40, Val61–Leu81, Pro106–Thr126, Pro143–Ile163, Ile171–Ala191, Phe212–Thr232, Trp253–Leu273, Phe291–Ile311, Ile343–Phe363, Ala372–Leu392, Ile400–Ala420, and Phe425–Ile445.

It belongs to the HAK/KUP transporter (TC 2.A.72) family.

It localises to the cell inner membrane. It catalyses the reaction K(+)(in) + H(+)(in) = K(+)(out) + H(+)(out). Transport of potassium into the cell. Likely operates as a K(+):H(+) symporter. This is Probable potassium transport system protein Kup 3 from Legionella pneumophila (strain Lens).